Consider the following 563-residue polypeptide: Arginine--tRNA ligase (563 aa).

The short motif at 120 to 130 (PNIAKPFHVGH) is the 'HIGH' region element.

This sequence belongs to the class-I aminoacyl-tRNA synthetase family. In terms of assembly, monomer.

It is found in the cytoplasm. The catalysed reaction is tRNA(Arg) + L-arginine + ATP = L-arginyl-tRNA(Arg) + AMP + diphosphate. The sequence is that of Arginine--tRNA ligase from Clostridium acetobutylicum (strain ATCC 824 / DSM 792 / JCM 1419 / IAM 19013 / LMG 5710 / NBRC 13948 / NRRL B-527 / VKM B-1787 / 2291 / W).